A 190-amino-acid chain; its full sequence is Ribosome hibernation promotion factor (190 aa).

Belongs to the HPF/YfiA ribosome-associated protein family. Long HPF subfamily. As to quaternary structure, interacts with 100S ribosomes.

The protein localises to the cytoplasm. Required for dimerization of active 70S ribosomes into 100S ribosomes in stationary phase; 100S ribosomes are translationally inactive and sometimes present during exponential growth. In Rhizobium meliloti (strain 1021) (Ensifer meliloti), this protein is Ribosome hibernation promotion factor.